A 609-amino-acid polypeptide reads, in one-letter code: Putative pectinesterase/pectinesterase inhibitor 45 (609 aa).

The chain crosses the membrane as a helical span at residues 25 to 45 (IILGVVSVLVVAAAIIGGAFA). N-linked (GlcNAc...) asparagine glycans are attached at residues N51, N62, N100, N114, N183, N229, N296, N306, N346, and N362. The disordered stretch occupies residues 54-87 (QEQGKTTNNKSKDSPTKSESPSPKPPSSAAQTVK). A pectinesterase inhibitor 45 region spans residues 89 to 241 (GQVDKIIQTL…QVLTSNSLAM (153 aa)). Residues 296-593 (NATVAKDGSG…FTVGPFLQGE (298 aa)) form a pectinesterase 45 region. Substrate is bound by residues T371 and Q401. Catalysis depends on D424, which acts as the Proton donor; for pectinesterase activity. A disulfide bridge connects residues C438 and C458. Residue D445 is the Nucleophile; for pectinesterase activity of the active site. The N-linked (GlcNAc...) asparagine glycan is linked to N491. R513 and W515 together coordinate substrate.

It in the N-terminal section; belongs to the PMEI family. In the C-terminal section; belongs to the pectinesterase family. As to expression, expressed in flower buds and pollen.

The protein localises to the membrane. It carries out the reaction [(1-&gt;4)-alpha-D-galacturonosyl methyl ester](n) + n H2O = [(1-&gt;4)-alpha-D-galacturonosyl](n) + n methanol + n H(+). It functions in the pathway glycan metabolism; pectin degradation; 2-dehydro-3-deoxy-D-gluconate from pectin: step 1/5. Acts in the modification of cell walls via demethylesterification of cell wall pectin. In Arabidopsis thaliana (Mouse-ear cress), this protein is Putative pectinesterase/pectinesterase inhibitor 45 (PME45).